We begin with the raw amino-acid sequence, 100 residues long: Small ribosomal subunit protein uS14c (100 aa).

Belongs to the universal ribosomal protein uS14 family. As to quaternary structure, part of the 30S ribosomal subunit.

The protein resides in the plastid. The protein localises to the chloroplast. Binds 16S rRNA, required for the assembly of 30S particles. This Citrus sinensis (Sweet orange) protein is Small ribosomal subunit protein uS14c.